We begin with the raw amino-acid sequence, 315 residues long: Probable NAD(P)H-dependent D-xylose reductase xyl1 (315 aa).

The Proton donor role is filled by Tyr-50. His-112 provides a ligand contact to substrate. Residues 166–167 (SN), 215–224 (SSFGPLSFVE), and 271–281 (KSNDPTRLAQN) contribute to the NAD(+) site.

Belongs to the aldo/keto reductase family.

The catalysed reaction is xylitol + NAD(+) = D-xylose + NADH + H(+). It carries out the reaction xylitol + NADP(+) = D-xylose + NADPH + H(+). It participates in carbohydrate metabolism; D-xylose degradation. Catalyzes the initial reaction in the xylose utilization pathway by reducing D-xylose into xylitol. Xylose is a major component of hemicelluloses such as xylan. Most fungi utilize D-xylose via three enzymatic reactions, xylose reductase (XR), xylitol dehydrogenase (XDH), and xylulokinase, to form xylulose 5-phosphate, which enters pentose phosphate pathway. The polypeptide is Probable NAD(P)H-dependent D-xylose reductase xyl1 (xyl1) (Aspergillus fumigatus (strain ATCC MYA-4609 / CBS 101355 / FGSC A1100 / Af293) (Neosartorya fumigata)).